A 171-amino-acid chain; its full sequence is Disulfide bond formation protein B (171 aa).

The Cytoplasmic segment spans residues 1-13; the sequence is MTFISNLADTRLA. Residues 14-30 traverse the membrane as a helical segment; that stretch reads WGLLFLSALVLVAYALF. Residues 31–48 lie on the Periplasmic side of the membrane; that stretch reads SQHAMGLQPCIMCIYQRT. Cys40 and Cys43 form a disulfide bridge. The helical transmembrane segment at 49–63 threads the bilayer; the sequence is AIFGIMFACVPVLAA. At 64-70 the chain is on the cytoplasmic side; it reads NNMLTRL. The helical transmembrane segment at 71-88 threads the bilayer; that stretch reads FAFTVWGISAIWGGLIAW. Topologically, residues 89–144 are periplasmic; that stretch reads EHYDIQNAANPFFATCEIVPNFPSWLPLHEWLPNLFAATGDCGNIDWVFMDMSMPQ. Cys104 and Cys130 are disulfide-bonded. A helical transmembrane segment spans residues 145–163; it reads WMMVVFAIYSSIWFVVLAS. The Cytoplasmic segment spans residues 164–171; that stretch reads RLIGNRAI.

This sequence belongs to the DsbB family.

The protein resides in the cell inner membrane. Its function is as follows. Required for disulfide bond formation in some periplasmic proteins. Acts by oxidizing the DsbA protein. The polypeptide is Disulfide bond formation protein B (Pseudoalteromonas atlantica (strain T6c / ATCC BAA-1087)).